We begin with the raw amino-acid sequence, 458 residues long: Putative long chain fatty acid-CoA ligase VraA (458 aa).

The protein belongs to the ATP-dependent AMP-binding enzyme family.

This is Putative long chain fatty acid-CoA ligase VraA (vraA) from Staphylococcus aureus (strain Mu3 / ATCC 700698).